Reading from the N-terminus, the 144-residue chain is MRQTTIIRHKETDKKWFVVDAEGQVLGRLASVVASYLRGKNKPTFTPNVDMGDNIIVINADKVVLTAKKEDDKIYYSSSGYNGGLKAINARDLRAKKPFALVEKAVKGMIPHTKLGRKQFGNLYVYAGREHNHEAQKPEVLEVK.

The protein belongs to the universal ribosomal protein uL13 family. Part of the 50S ribosomal subunit.

Functionally, this protein is one of the early assembly proteins of the 50S ribosomal subunit, although it is not seen to bind rRNA by itself. It is important during the early stages of 50S assembly. This Mycoplasma mobile (strain ATCC 43663 / 163K / NCTC 11711) (Mesomycoplasma mobile) protein is Large ribosomal subunit protein uL13.